The chain runs to 496 residues: GTPase Der (496 aa).

2 EngA-type G domains span residues 3-166 and 208-381; these read PVVA…FDNL and IKLA…RSAT. GTP contacts are provided by residues 9-16, 56-60, 118-121, 214-221, 261-265, and 326-329; these read GRPNVGKS, DTGGI, NKVD, DTAGV, and NKWD. In terms of domain architecture, KH-like spans 382–466; that stretch reads TRVGTSVLTR…PIRIQFQNSD (85 aa).

The protein belongs to the TRAFAC class TrmE-Era-EngA-EngB-Septin-like GTPase superfamily. EngA (Der) GTPase family. In terms of assembly, associates with the 50S ribosomal subunit.

In terms of biological role, GTPase that plays an essential role in the late steps of ribosome biogenesis. In Vibrio vulnificus (strain CMCP6), this protein is GTPase Der.